Reading from the N-terminus, the 198-residue chain is Cytochrome c oxidase assembly protein CtaG (198 aa).

The Cytoplasmic portion of the chain corresponds to 1–12 (MADTGQSDRKER). The helical; Signal-anchor for type II membrane protein transmembrane segment at 13 to 35 (SNGVIVGTCLAFVVGMVGMAYAA) threads the bilayer. Residues 36 to 198 (VPLYDMFCRV…QVKSRTENKL (163 aa)) lie on the Periplasmic side of the membrane.

This sequence belongs to the COX11/CtaG family.

Its subcellular location is the cell inner membrane. Exerts its effect at some terminal stage of cytochrome c oxidase synthesis, probably by being involved in the insertion of the copper B into subunit I. The protein is Cytochrome c oxidase assembly protein CtaG of Sinorhizobium medicae (strain WSM419) (Ensifer medicae).